The primary structure comprises 465 residues: Cysteine--tRNA ligase (465 aa).

Cys27 lines the Zn(2+) pocket. The short motif at 29-39 is the 'HIGH' region element; the sequence is PTVYNYIHIGN. 3 residues coordinate Zn(2+): Cys207, His232, and Glu236. The 'KMSKS' region signature appears at 264 to 268; that stretch reads KMSKS. Lys267 serves as a coordination point for ATP.

Belongs to the class-I aminoacyl-tRNA synthetase family. Monomer. It depends on Zn(2+) as a cofactor.

Its subcellular location is the cytoplasm. It carries out the reaction tRNA(Cys) + L-cysteine + ATP = L-cysteinyl-tRNA(Cys) + AMP + diphosphate. The protein is Cysteine--tRNA ligase of Clostridioides difficile (strain 630) (Peptoclostridium difficile).